The sequence spans 282 residues: Transcription repressor MYB4 (282 aa).

HTH myb-type domains lie at 9 to 61 (KAHT…INYL) and 62 to 116 (RPDL…RRKL). 2 consecutive DNA-binding regions (H-T-H motif) follow at residues 37–61 (WRSL…INYL) and 89–112 (WSLI…NTHI). Positions 119–145 (RGIDPTSHRPIQESSASQDSKPTQLEP) are disordered. Positions 130 to 145 (QESSASQDSKPTQLEP) are enriched in polar residues.

Interacts with BHLH12/MYC1 and BHLH42/TT8. Interacts with SAD2. Widely expressed at low level. Highly expressed in siliques. Weakly expressed in seedlings, young and mature leaves, cauline leaves, stems, flower buds and roots.

The protein localises to the nucleus. Its function is as follows. Transcription repressor involved in regulation of protection against UV. Mediates transcriptional repression of CYP73A5, the gene encoding trans-cinnamate 4-monooxygenase, thereby regulating the accumulation of the UV-protectant compound sinapoylmalate. The chain is Transcription repressor MYB4 (MYB4) from Arabidopsis thaliana (Mouse-ear cress).